Here is a 399-residue protein sequence, read N- to C-terminus: C-type lectin domain family 4 member M (399 aa).

Over M1–G49 the chain is Cytoplasmic. An Endocytosis signal motif is present at residues L14 to L15. The helical; Signal-anchor for type II membrane protein transmembrane segment at P50–V70 threads the bilayer. At Q71 to E399 the chain is on the extracellular side. N92 is a glycosylation site (N-linked (GlcNAc...) asparagine). A run of 7 repeats spans residues K108–S130, T131–S153, R154–S176, K177–S199, K200–S222, K223–S245, and K246–C268. Residues K108–P269 form a 7 X approximate tandem repeats region. 4 disulfides stabilise this stretch: C265/C395, C268/C279, C296/C389, and C368/C381. Positions F274–K390 constitute a C-type lectin domain. Ca(2+) contacts are provided by E359, N361, S363, E366, N377, and D378. A glycan (N-linked (GlcNAc...) asparagine) is linked at N361.

As to quaternary structure, homotetramer.

It is found in the membrane. Its function is as follows. Probable pathogen-recognition receptor involved in peripheral immune surveillance in liver. May mediate the endocytosis of pathogens which are subsequently degraded in lysosomal compartments. Probably recognizes in a calcium-dependent manner high mannose N-linked oligosaccharides in a variety of pathogen antigens. Is a receptor for ICAM3, probably by binding to mannose-like carbohydrates. The sequence is that of C-type lectin domain family 4 member M (CLEC4M) from Hylobates lar (Lar gibbon).